Consider the following 1024-residue polypeptide: Hemolysin, plasmid (1024 aa).

Over residues Ala20 to Lys32 the composition is skewed to polar residues. Residues Ala20 to Ala39 form a disordered region. 3 helical membrane passes run Ile238–Asn260, Lys268–Ala327, and Asp365–Glu411. 2 N6-myristoyl lysine lipidation sites follow: Lys564 and Lys690. 6 Hemolysin-type calcium-binding repeats span residues Phe732–Ile749, Glu750–Leu767, Ser768–Leu785, Ile786–Phe803, Phe816–Leu833, and Asp834–Tyr851.

The protein belongs to the RTX prokaryotic toxin (TC 1.C.11) family. In terms of processing, myristoylated by HlyC; the toxin only becomes active when modified. Mainly myristoylated, while a minor fraction is acylated with pentadecanoyl (C15:0; 26%) and heptadecanoyl (C17:0; 6%) fatty acyl groups. Fatty acylation is involved in binding to host membranes and promotes the irreversible insertion of Hemolysin into the host cell membrane. Can be activated by both myristoylation and palmitoylation, but HlyC catalyzes lysine myristoylation.

It localises to the secreted. The protein localises to the host cell membrane. Its function is as follows. Bacterial hemolysins are exotoxins that attack blood cell membranes and cause cell rupture by forming a pore. This is Hemolysin, plasmid from Escherichia coli.